We begin with the raw amino-acid sequence, 432 residues long: Proteinase-activated receptor 1 (432 aa).

The first 21 residues, 1 to 21, serve as a signal peptide directing secretion; sequence MGPRRLLLVAVGLSLCGPLLS. Positions 22–45 are cleaved as a propeptide — removed for receptor activation; the sequence is SRVPMRQPESERMYATPYATPNPR. Residues 46-109 lie on the Extracellular side of the membrane; that stretch reads SFFLRNPSED…SGYLTSPWLT (64 aa). N-linked (GlcNAc...) asparagine glycans are attached at residues Asn-69 and Asn-82. A helical membrane pass occupies residues 110–135; it reads LFIPSVYTFVFIVSLPLNILAIAVFV. Topologically, residues 136–144 are cytoplasmic; that stretch reads FRMKVKKPA. The helical transmembrane segment at 145–164 threads the bilayer; it reads VVYMLHLAMADVLFVSVLPF. Topologically, residues 165-183 are extracellular; it reads KISYYFSGTDWQFGSGMCR. A disulfide bridge links Cys-182 with Cys-261. A helical membrane pass occupies residues 184 to 205; sequence FATAACYCNMYASIMLMTVISI. Residues 206–225 lie on the Cytoplasmic side of the membrane; that stretch reads DRFLAVVYPIQSLSWRTLGR. The helical transmembrane segment at 226–246 threads the bilayer; sequence ANFTCVVIWVMAIMGVVPLLL. Residues 247-275 lie on the Extracellular side of the membrane; sequence KEQTTQVPGLNITTCHDVLNETLLHGFYS. Residues Asn-257 and Asn-266 are each glycosylated (N-linked (GlcNAc...) asparagine). A helical membrane pass occupies residues 276–295; sequence YYFSAFSAIFFLVPLIISTV. At 296-318 the chain is on the cytoplasmic side; sequence CYTSIIRCLSSSAVANRSKKSRA. The helical transmembrane segment at 319 to 341 threads the bilayer; the sequence is LFLSAAVFCIFIVCFGPTNVLLI. At 342 to 357 the chain is on the extracellular side; that stretch reads VHYLLLSDSPGTETAY. A helical membrane pass occupies residues 358–381; sequence FAYLLCVCVTSVASCIDPLIYYYA. Residues 382 to 432 are Cytoplasmic-facing; that stretch reads SSECQKHLYSILCCRESSDSNSCNSTGQLMPSKMDTCSSHLNNSIYKKLLA. Position 425 is a phosphoserine (Ser-425).

Belongs to the G-protein coupled receptor 1 family. Post-translationally, proteolytic cleavage by thrombin generates a new N-terminus that functions as a tethered ligand. Also proteolytically cleaved by cathepsin CTSG. Phosphorylated in the C-terminal tail; probably mediating desensitization prior to the uncoupling and internalization of the receptor. As to expression, expressed in primary cultured oligodendrocytes.

It localises to the cell membrane. In terms of biological role, high affinity receptor that binds the activated thrombin, leading to calcium release from intracellular stores. The thrombin-activated receptor signaling pathway is mediated through PTX-insensitive G proteins, activation of phospholipase C resulting in the production of 1D-myo-inositol 1,4,5-trisphosphate (InsP3) which binds to InsP3 receptors causing calcium release from the stores. In astrocytes, the calcium released into the cytosol allows the Ca(2+)-dependent release of L-glutamate into the synaptic cleft through BEST1, that targets the neuronal postsynaptic GRIN2A/NMDAR receptor resulting in the synaptic plasticity regulation. May play a role in platelets activation and in vascular development. Mediates up-regulation of pro-inflammatory cytokines, such as MCP-1/CCL2 and IL6, triggered by coagulation factor Xa (F10) in cardiac fibroblasts and umbilical vein endothelial cells. This Rattus norvegicus (Rat) protein is Proteinase-activated receptor 1.